The sequence spans 127 residues: DNA-directed RNA polymerase subunit omega (127 aa).

This sequence belongs to the RNA polymerase subunit omega family. In terms of assembly, the RNAP catalytic core consists of 2 alpha, 1 beta, 1 beta' and 1 omega subunit. When a sigma factor is associated with the core the holoenzyme is formed, which can initiate transcription.

The enzyme catalyses RNA(n) + a ribonucleoside 5'-triphosphate = RNA(n+1) + diphosphate. Functionally, promotes RNA polymerase assembly. Latches the N- and C-terminal regions of the beta' subunit thereby facilitating its interaction with the beta and alpha subunits. This Rickettsia rickettsii (strain Iowa) protein is DNA-directed RNA polymerase subunit omega.